A 313-amino-acid chain; its full sequence is Porphobilinogen deaminase (313 aa).

Cys241 bears the S-(dipyrrolylmethanemethyl)cysteine mark.

This sequence belongs to the HMBS family. In terms of assembly, monomer. Dipyrromethane serves as cofactor.

The enzyme catalyses 4 porphobilinogen + H2O = hydroxymethylbilane + 4 NH4(+). The protein operates within porphyrin-containing compound metabolism; protoporphyrin-IX biosynthesis; coproporphyrinogen-III from 5-aminolevulinate: step 2/4. It functions in the pathway porphyrin-containing compound metabolism; chlorophyll biosynthesis. In terms of biological role, tetrapolymerization of the monopyrrole PBG into the hydroxymethylbilane pre-uroporphyrinogen in several discrete steps. This chain is Porphobilinogen deaminase, found in Chlorobium chlorochromatii (strain CaD3).